We begin with the raw amino-acid sequence, 100 residues long: ATP synthase subunit c (100 aa).

2 helical membrane-spanning segments follow: residues 27-47 and 72-92; these read SVIA…IGMG and FIAL…TLIV.

Belongs to the ATPase C chain family. As to quaternary structure, F-type ATPases have 2 components, F(1) - the catalytic core - and F(0) - the membrane proton channel. F(1) has five subunits: alpha(3), beta(3), gamma(1), delta(1), epsilon(1). F(0) has three main subunits: a(1), b(2) and c(10-14). The alpha and beta chains form an alternating ring which encloses part of the gamma chain. F(1) is attached to F(0) by a central stalk formed by the gamma and epsilon chains, while a peripheral stalk is formed by the delta and b chains.

Its subcellular location is the cell inner membrane. Its function is as follows. F(1)F(0) ATP synthase produces ATP from ADP in the presence of a proton or sodium gradient. F-type ATPases consist of two structural domains, F(1) containing the extramembraneous catalytic core and F(0) containing the membrane proton channel, linked together by a central stalk and a peripheral stalk. During catalysis, ATP synthesis in the catalytic domain of F(1) is coupled via a rotary mechanism of the central stalk subunits to proton translocation. Functionally, key component of the F(0) channel; it plays a direct role in translocation across the membrane. A homomeric c-ring of between 10-14 subunits forms the central stalk rotor element with the F(1) delta and epsilon subunits. This Campylobacter concisus (strain 13826) protein is ATP synthase subunit c.